Here is a 329-residue protein sequence, read N- to C-terminus: AUGMIN subunit 7 (329 aa).

Residues 169–197 (DVSELETKLSEQAKILSNLQQKVDDLAAK) are a coiled coil.

Part of the augmin complex composed of 8 subunits. The complex acts on microtubules and interacts with gamma-tubulin in spindles and the phragmoplast.

Its subcellular location is the cytoplasm. It is found in the cytoskeleton. The protein resides in the spindle. It localises to the phragmoplast. In terms of biological role, contributes to the assembly of the acentrosomal spindle and phragmoplast microtubule arrays as part of the augmin complex. Regulates the association of gamma-tubulin with the spindle and phragmoplast microtubules. The chain is AUGMIN subunit 7 from Arabidopsis thaliana (Mouse-ear cress).